The sequence spans 376 residues: Chaperone protein DnaJ (376 aa).

Positions 5-70 (DYYEILGVSK…QKRAAYDQYG (66 aa)) constitute a J domain. The CR-type zinc finger occupies 131–209 (GVTKEIRIPT…CHGHGRVERS (79 aa)). Zn(2+) is bound by residues C144, C147, C161, C164, C183, C186, C197, and C200. 4 CXXCXGXG motif repeats span residues 144-151 (CDVCHGSG), 161-168 (CPTCHGSG), 183-190 (CPHCQGRG), and 197-204 (CNKCHGHG).

This sequence belongs to the DnaJ family. As to quaternary structure, homodimer. The cofactor is Zn(2+).

It is found in the cytoplasm. In terms of biological role, participates actively in the response to hyperosmotic and heat shock by preventing the aggregation of stress-denatured proteins and by disaggregating proteins, also in an autonomous, DnaK-independent fashion. Unfolded proteins bind initially to DnaJ; upon interaction with the DnaJ-bound protein, DnaK hydrolyzes its bound ATP, resulting in the formation of a stable complex. GrpE releases ADP from DnaK; ATP binding to DnaK triggers the release of the substrate protein, thus completing the reaction cycle. Several rounds of ATP-dependent interactions between DnaJ, DnaK and GrpE are required for fully efficient folding. Also involved, together with DnaK and GrpE, in the DNA replication of plasmids through activation of initiation proteins. The sequence is that of Chaperone protein DnaJ from Shigella flexneri.